A 226-amino-acid chain; its full sequence is Ribonuclease 3 (226 aa).

Residues Thr5–Gly127 form the RNase III domain. Glu40 lines the Mg(2+) pocket. The active site involves Asp44. Mg(2+) contacts are provided by Asp113 and Glu116. Glu116 is a catalytic residue. One can recognise a DRBM domain in the interval Asp154–Ser224.

The protein belongs to the ribonuclease III family. Homodimer. Requires Mg(2+) as cofactor.

Its subcellular location is the cytoplasm. It catalyses the reaction Endonucleolytic cleavage to 5'-phosphomonoester.. Functionally, digests double-stranded RNA. Involved in the processing of primary rRNA transcript to yield the immediate precursors to the large and small rRNAs (23S and 16S). Processes some mRNAs, and tRNAs when they are encoded in the rRNA operon. Processes pre-crRNA and tracrRNA of type II CRISPR loci if present in the organism. The sequence is that of Ribonuclease 3 from Xanthomonas axonopodis pv. citri (strain 306).